The primary structure comprises 84 residues: Small ribosomal subunit protein bS16 (84 aa).

This sequence belongs to the bacterial ribosomal protein bS16 family.

This is Small ribosomal subunit protein bS16 from Paraburkholderia phytofirmans (strain DSM 17436 / LMG 22146 / PsJN) (Burkholderia phytofirmans).